The sequence spans 273 residues: Putative esterase/lipase 3 (273 aa).

Residue H34 is part of the active site. The active-site Charge relay system is S100.

Belongs to the lipase/esterase LIP3/BchO family.

The protein is Putative esterase/lipase 3 of Mycoplasma genitalium (strain ATCC 33530 / DSM 19775 / NCTC 10195 / G37) (Mycoplasmoides genitalium).